Reading from the N-terminus, the 141-residue chain is 6,7-dimethyl-8-ribityllumazine synthase (141 aa).

5-amino-6-(D-ribitylamino)uracil is bound by residues phenylalanine 14, 46 to 48 (VFD), and 70 to 72 (CVI). A (2S)-2-hydroxy-3-oxobutyl phosphate-binding site is contributed by 75–76 (ET). Residue histidine 78 is the Proton donor of the active site. Leucine 103 provides a ligand contact to 5-amino-6-(D-ribitylamino)uracil. Arginine 118 is a binding site for (2S)-2-hydroxy-3-oxobutyl phosphate.

In terms of assembly, forms an icosahedral capsid composed of 60 subunits, arranged as a dodecamer of pentamers.

It catalyses the reaction (2S)-2-hydroxy-3-oxobutyl phosphate + 5-amino-6-(D-ribitylamino)uracil = 6,7-dimethyl-8-(1-D-ribityl)lumazine + phosphate + 2 H2O + H(+). It participates in cofactor biosynthesis; riboflavin biosynthesis; riboflavin from 2-hydroxy-3-oxobutyl phosphate and 5-amino-6-(D-ribitylamino)uracil: step 1/2. Its function is as follows. Catalyzes the formation of 6,7-dimethyl-8-ribityllumazine by condensation of 5-amino-6-(D-ribitylamino)uracil with 3,4-dihydroxy-2-butanone 4-phosphate. This is the penultimate step in the biosynthesis of riboflavin. In Methanocaldococcus jannaschii (strain ATCC 43067 / DSM 2661 / JAL-1 / JCM 10045 / NBRC 100440) (Methanococcus jannaschii), this protein is 6,7-dimethyl-8-ribityllumazine synthase (ribH).